Here is a 264-residue protein sequence, read N- to C-terminus: Acyl-[acyl-carrier-protein]--UDP-N-acetylglucosamine O-acyltransferase (264 aa).

This sequence belongs to the transferase hexapeptide repeat family. LpxA subfamily. As to quaternary structure, homotrimer.

Its subcellular location is the cytoplasm. It carries out the reaction a (3R)-hydroxyacyl-[ACP] + UDP-N-acetyl-alpha-D-glucosamine = a UDP-3-O-[(3R)-3-hydroxyacyl]-N-acetyl-alpha-D-glucosamine + holo-[ACP]. Its pathway is glycolipid biosynthesis; lipid IV(A) biosynthesis; lipid IV(A) from (3R)-3-hydroxytetradecanoyl-[acyl-carrier-protein] and UDP-N-acetyl-alpha-D-glucosamine: step 1/6. In terms of biological role, involved in the biosynthesis of lipid A, a phosphorylated glycolipid that anchors the lipopolysaccharide to the outer membrane of the cell. The protein is Acyl-[acyl-carrier-protein]--UDP-N-acetylglucosamine O-acyltransferase of Rickettsia prowazekii (strain Madrid E).